The sequence spans 377 residues: Actin-related protein T2 (377 aa).

Belongs to the actin family.

The protein resides in the cytoplasm. The protein localises to the cytoskeleton. This is Actin-related protein T2 (ACTRT2) from Bos taurus (Bovine).